A 207-amino-acid chain; its full sequence is Holliday junction branch migration complex subunit RuvA (207 aa).

Residues 1–64 (MISYIKGELA…EDECSLFGFL (64 aa)) form a domain I region. The domain II stretch occupies residues 65–143 (TRDDLSMFKM…LDEVFESALS (79 aa)). A flexible linker region spans residues 144 to 155 (KNKKADNNSNVS). The segment at 156-207 (NVMMIRNDAVEALVSLGYSSKDALVAVKEVEDIENKDSETVLKEALKKLVKF) is domain III.

The protein belongs to the RuvA family. Homotetramer. Forms an RuvA(8)-RuvB(12)-Holliday junction (HJ) complex. HJ DNA is sandwiched between 2 RuvA tetramers; dsDNA enters through RuvA and exits via RuvB. An RuvB hexamer assembles on each DNA strand where it exits the tetramer. Each RuvB hexamer is contacted by two RuvA subunits (via domain III) on 2 adjacent RuvB subunits; this complex drives branch migration. In the full resolvosome a probable DNA-RuvA(4)-RuvB(12)-RuvC(2) complex forms which resolves the HJ.

It is found in the cytoplasm. Its function is as follows. The RuvA-RuvB-RuvC complex processes Holliday junction (HJ) DNA during genetic recombination and DNA repair, while the RuvA-RuvB complex plays an important role in the rescue of blocked DNA replication forks via replication fork reversal (RFR). RuvA specifically binds to HJ cruciform DNA, conferring on it an open structure. The RuvB hexamer acts as an ATP-dependent pump, pulling dsDNA into and through the RuvAB complex. HJ branch migration allows RuvC to scan DNA until it finds its consensus sequence, where it cleaves and resolves the cruciform DNA. The sequence is that of Holliday junction branch migration complex subunit RuvA from Lachnospira eligens (strain ATCC 27750 / DSM 3376 / VPI C15-48 / C15-B4) (Eubacterium eligens).